Here is a 464-residue protein sequence, read N- to C-terminus: Chitobiosyldiphosphodolichol beta-mannosyltransferase (464 aa).

Topologically, residues 1 to 2 (MA) are lumenal. A helical transmembrane segment spans residues 3 to 23 (ASCLVLLALCLLLPLLLLGGW). The Cytoplasmic segment spans residues 24–99 (KRWRRGRTAR…ELQSLAVGPR (76 aa)). Positions 100 to 120 (VFQYGVKVVFQAMYLLWKLMW) form an intramembrane region, helical. Over 121 to 464 (REPGAYIFLQ…QTVLPLVMDT (344 aa)) the chain is Cytoplasmic. Ser242 is modified (phosphoserine). The disordered stretch occupies residues 242–261 (SPFRARSEPEDPATERSAFT).

This sequence belongs to the glycosyltransferase group 1 family. Glycosyltransferase 33 subfamily.

It localises to the endoplasmic reticulum membrane. The catalysed reaction is an N,N'-diacetylchitobiosyl-diphospho-di-trans,poly-cis-dolichol + GDP-alpha-D-mannose = a beta-D-Man-(1-&gt;4)-beta-D-GlcNAc-(1-&gt;4)-alpha-D-GlcNAc-diphospho-di-trans,poly-cis-dolichol + GDP + H(+). Its pathway is protein modification; protein glycosylation. Mannosyltransferase that operates in the biosynthetic pathway of dolichol-linked oligosaccharides, the glycan precursors employed in protein asparagine (N)-glycosylation. The assembly of dolichol-linked oligosaccharides begins on the cytosolic side of the endoplasmic reticulum membrane and finishes in its lumen. The sequential addition of sugars to dolichol pyrophosphate produces dolichol-linked oligosaccharides containing fourteen sugars, including two GlcNAcs, nine mannoses and three glucoses. Once assembled, the oligosaccharide is transferred from the lipid to nascent proteins by oligosaccharyltransferases. Catalyzes, on the cytoplasmic face of the endoplasmic reticulum, the addition of the first mannose residues to the dolichol-linked oligosaccharide chain, to produce Man1GlcNAc(2)-PP-dolichol core oligosaccharide. Man1GlcNAc(2)-PP-dolichol is a substrate for ALG2, the following enzyme in the biosynthetic pathway. This Pongo abelii (Sumatran orangutan) protein is Chitobiosyldiphosphodolichol beta-mannosyltransferase.